Consider the following 235-residue polypeptide: MAIYRLPREVSFPDPDLAEPDGLLAVGGDLSPERLLTAYAAGIFPWYGEDTPILWWSPDPRLVLEPERLHVSASLARTIRRGRYRVTADRAFEDVVRRCAGRARPGQDGTWIVPEMIDAYVRLHRLGFAHSFEAWEGEALAGGLYGVSLGGAFFGESMFADRPDASKVAFVRSVEWLARWDVRLIDCQVRTEHLARFGAREIPRAEFLARLGRALDRPTLRGRWDLDAGDRPAGA.

The protein belongs to the L/F-transferase family.

The protein resides in the cytoplasm. The enzyme catalyses N-terminal L-lysyl-[protein] + L-leucyl-tRNA(Leu) = N-terminal L-leucyl-L-lysyl-[protein] + tRNA(Leu) + H(+). The catalysed reaction is N-terminal L-arginyl-[protein] + L-leucyl-tRNA(Leu) = N-terminal L-leucyl-L-arginyl-[protein] + tRNA(Leu) + H(+). It carries out the reaction L-phenylalanyl-tRNA(Phe) + an N-terminal L-alpha-aminoacyl-[protein] = an N-terminal L-phenylalanyl-L-alpha-aminoacyl-[protein] + tRNA(Phe). Its function is as follows. Functions in the N-end rule pathway of protein degradation where it conjugates Leu, Phe and, less efficiently, Met from aminoacyl-tRNAs to the N-termini of proteins containing an N-terminal arginine or lysine. The chain is Leucyl/phenylalanyl-tRNA--protein transferase from Anaeromyxobacter sp. (strain Fw109-5).